The chain runs to 488 residues: Integrin beta-like protein 1 (488 aa).

The first 21 residues, 1–21 (MHAGAFINFVWALSLVSLLAA), serve as a signal peptide directing secretion. Intrachain disulfides connect cysteine 38–cysteine 65, cysteine 49–cysteine 63, cysteine 57–cysteine 68, cysteine 70–cysteine 83, cysteine 85–cysteine 106, cysteine 90–cysteine 104, cysteine 98–cysteine 109, cysteine 111–cysteine 120, cysteine 126–cysteine 153, cysteine 137–cysteine 151, cysteine 145–cysteine 156, cysteine 158–cysteine 172, cysteine 174–cysteine 196, cysteine 179–cysteine 194, cysteine 188–cysteine 199, cysteine 201–cysteine 210, cysteine 214–cysteine 241, cysteine 225–cysteine 239, cysteine 233–cysteine 244, cysteine 246–cysteine 263, cysteine 265–cysteine 290, cysteine 270–cysteine 288, cysteine 282–cysteine 293, cysteine 295–cysteine 304, cysteine 310–cysteine 337, cysteine 321–cysteine 335, cysteine 329–cysteine 340, cysteine 342–cysteine 355, cysteine 357–cysteine 378, cysteine 362–cysteine 376, cysteine 370–cysteine 381, cysteine 383–cysteine 392, cysteine 398–cysteine 425, cysteine 409–cysteine 423, cysteine 417–cysteine 428, cysteine 430–cysteine 442, cysteine 444–cysteine 465, cysteine 449–cysteine 463, cysteine 457–cysteine 468, and cysteine 470–cysteine 479. I-EGF domains lie at 38 to 84 (CRLP…PLCE), 85 to 121 (CHDW…EACQ), 126 to 173 (CDLT…KYCE), 174 to 211 (CDDT…DKCE), 214 to 264 (CDIT…DTCE), 265 to 305 (CDER…RKCE), 310 to 356 (CALS…KNCE), 357 to 393 (CDDR…KLCQ), 398 to 443 (CNMT…EFCE), and 444 to 480 (CDDR…NACE). One copy of the I repeat lies at 49–89 (CRTPDGSICSGRGSCDCGICLCEVKEAGKYYGPLCECHDWV). The tract at residues 49 to 488 (CRTPDGSICS…CEIWLGSEYP (440 aa)) is cysteine-rich tandem repeats. Residues 90-136 (CHTYDGQVCAGHGQCDCGVCKCDVGWSGEACQYPTTCDLTRKKSNEM) form an II repeat. One copy of the III repeat lies at 137–178 (CKNSQAVICSNAGTCQCGRCKCENSDNSGLIYGKYCECDDTE). The stretch at 179–224 (CFDDETQEICGGHGKCYCGNCYCEAGWHGDKCEFQCDITPWEIKKR) is one IV repeat. Residues 225–269 (CTSPDGKICSNRGTCVCGECTCHDVDPTGDWGDIHGDTCECDERN) form a V repeat. The stretch at 270-320 (CKSVYDRYSDDFCSGHGQCNCGRCDCKDGWTGRKCEHPRACALSIEESKKK) is one VI repeat. A VII repeat occupies 321–361 (CQGSASQPCSGRGKCECGQCTCFPPGDSKVYGKNCECDDRQ). A VIII repeat occupies 362 to 408 (CEDLEGKICGEHGTCSCGRCICEAGWFGKLCQHERKCNMTEEESKSQ). The N-linked (GlcNAc...) asparagine glycan is linked to asparagine 399. One copy of the IX repeat lies at 409-448 (CESDDGILCSGKGSCHCGKCICSPQEWYVSGEFCECDDRD). A X repeat occupies 449-488 (CDKHDGLICTGNGICNCGNCECWEGWNGNACEIWLGSEYP).

It localises to the secreted. This is Integrin beta-like protein 1 (itgbl1) from Xenopus laevis (African clawed frog).